Consider the following 151-residue polypeptide: MMALLQRVTRARVTVDGATTGEIGTGLLALVCAEQGDTEAEADKLLAKLLKLRVFADEGGRMNRSLQEVGGGLLVVSQFTLAADTSGGNRPSFANAAPADTGRALYEHFVARARAQHGEVATGRFGAMMQVELVNDGPVTIPLRIPPASAA.

The short motif at 137–138 (GP) is the Gly-cisPro motif, important for rejection of L-amino acids element.

Belongs to the DTD family. As to quaternary structure, homodimer.

It is found in the cytoplasm. It carries out the reaction glycyl-tRNA(Ala) + H2O = tRNA(Ala) + glycine + H(+). It catalyses the reaction a D-aminoacyl-tRNA + H2O = a tRNA + a D-alpha-amino acid + H(+). Functionally, an aminoacyl-tRNA editing enzyme that deacylates mischarged D-aminoacyl-tRNAs. Also deacylates mischarged glycyl-tRNA(Ala), protecting cells against glycine mischarging by AlaRS. Acts via tRNA-based rather than protein-based catalysis; rejects L-amino acids rather than detecting D-amino acids in the active site. By recycling D-aminoacyl-tRNA to D-amino acids and free tRNA molecules, this enzyme counteracts the toxicity associated with the formation of D-aminoacyl-tRNA entities in vivo and helps enforce protein L-homochirality. This Azoarcus sp. (strain BH72) protein is D-aminoacyl-tRNA deacylase.